Consider the following 1023-residue polypeptide: GATOR2 complex protein WDR24 (1023 aa).

WD repeat units lie at residues 16-54, 64-108, 114-154, 159-199, 203-243, 245-287, and 291-329; these read NLGS…FKVT, SLNY…SKSV, DHSR…NASK, PKSE…IAVE, SHQG…SLNN, STIS…IPLF, and DHRD…KPYQ. The segment covering 563–578 has biased composition (low complexity); it reads SKNIIDNSNDSNQEIN. Disordered stretches follow at residues 563-621 and 661-824; these read SKNI…EPPS and QKST…SIEN. The span at 584–593 shows a compositional bias: acidic residues; the sequence is KEDEEEDDDN. A compositionally biased stretch (polar residues) spans 661–681; the sequence is QKSTDNISDNNSNVHVNIKRQ. Residues 682 to 695 show a composition bias toward low complexity; it reads NQPTNNNNNNSNID. Basic and acidic residues predominate over residues 696-742; the sequence is NLEKKSNKSKSTKENKESSLTDQNKQKRNDNKEKIDNNEIDNDNKDN. Residues 743-759 are compositionally biased toward acidic residues; it reads NDDDDNDVDNIGEDNDE. Positions 760 to 812 are enriched in low complexity; the sequence is INNNNDNNNNNNNNNNNNNNNNNNNNNNNNNNNNNNNNKNNNNDNNNNNNINN. Residues 947–969 form a C4-type zinc finger; it reads ACSSCGKSIPQNSIICEKCNKAS. 15 residues coordinate Zn(2+): Cys-948, Cys-951, Cys-962, Cys-965, Cys-972, Cys-975, Cys-986, Cys-989, His-991, His-994, His-997, Cys-1010, Cys-1014, His-1016, and Cys-1018. The RING-type; atypical zinc finger occupies 970–1021; the sequence is SKCSICRLPVKGMWVWCQGCGHGGHLEHMKSWFIDKNQKSCPTGCTHICTPF.

It belongs to the WD repeat WDR24 family. As to quaternary structure, probably part of the GATOR complex.

It localises to the lysosome membrane. The enzyme catalyses S-ubiquitinyl-[E2 ubiquitin-conjugating enzyme]-L-cysteine + [acceptor protein]-L-lysine = [E2 ubiquitin-conjugating enzyme]-L-cysteine + N(6)-ubiquitinyl-[acceptor protein]-L-lysine.. Its pathway is protein modification; protein ubiquitination. Functionally, as a component of the GATOR complex may function in the amino acid-sensing branch of the TORC1 signaling pathway. The chain is GATOR2 complex protein WDR24 from Dictyostelium discoideum (Social amoeba).